The sequence spans 88 residues: Long neurotoxin LNTX-1 (88 aa).

Residues 1–21 form the signal peptide; the sequence is MKTLLLTLVVVTIVCLDFGYA. 5 disulfide bridges follow: cysteine 24-cysteine 42, cysteine 35-cysteine 63, cysteine 48-cysteine 52, cysteine 67-cysteine 78, and cysteine 79-cysteine 84.

Belongs to the three-finger toxin family. Long-chain subfamily. Type II alpha-neurotoxin sub-subfamily. In terms of tissue distribution, expressed by the venom gland.

The protein localises to the secreted. Its function is as follows. Binds with high affinity to muscular (alpha-1/CHRNA1) and neuronal (alpha-7/CHRNA7) nicotinic acetylcholine receptor (nAChR) and inhibits acetylcholine from binding to the receptor, thereby impairing neuromuscular and neuronal transmission. In Demansia vestigiata (Lesser black whip snake), this protein is Long neurotoxin LNTX-1.